Here is a 276-residue protein sequence, read N- to C-terminus: Carbonic anhydrase Nec1 (276 aa).

Residues 1–27 (MKMINSIFTHGSLIILLLLFHSISIKA) form the signal peptide. In terms of domain architecture, Alpha-carbonic anhydrase spans 34 to 270 (REFDYLEGSE…LNHREVQLHC (237 aa)). Cys59 and Cys220 are disulfide-bonded. His98 serves as the catalytic Proton acceptor. Zn(2+) is bound by residues His124 and His126. Asn134 is a glycosylation site (N-linked (GlcNAc...) asparagine). Residue His143 coordinates Zn(2+). A substrate binding region spans residues 216–217 (TT).

This sequence belongs to the alpha-class carbonic anhydrase family. In terms of assembly, homodimer. It depends on Zn(2+) as a cofactor. Confined to nectaries.

It carries out the reaction hydrogencarbonate + H(+) = CO2 + H2O. It functions in the pathway one-carbon metabolism. Functionally, involved in the production of blood-red nectar containing the alkaloid nesocodin and that serves as a visual attractant for pollinator visitation, including vertebrates such as Phelsuma geckos. The nectar is initially acidic and pale yellow, but slowly becomes alkaline before turning into red within 24 hours. Together with NEC2 and NEC3, facilitates the condensation of sinapaldehyde ((E)-3,5-dimethoxy-4-hydroxycinnamaldehyde) and proline to form nesocodin, a pigment with a stable imine bond. Mediates the alkalinization (pH increase) of the flower nectar by catalyzing the reversible hydration of carbon dioxide. The polypeptide is Carbonic anhydrase Nec1 (Nesocodon mauritianus (Blue Mauritius bellflower)).